We begin with the raw amino-acid sequence, 375 residues long: Alpha-2,8-sialyltransferase 8B (375 aa).

Topologically, residues 1-6 are cytoplasmic; that stretch reads MQLQFR. A helical; Signal-anchor for type II membrane protein membrane pass occupies residues 7–23; sequence SWMLAALTLLVVFLIFA. The Lumenal segment spans residues 24–375; it reads DISEIEEEIG…LTVGQCDGAT (352 aa). Asn60, Asn72, Asn89, and Asn134 each carry an N-linked (GlcNAc...) asparagine glycan. Intrachain disulfides connect Cys157/Cys307 and Cys171/Cys371. CMP-N-acetyl-beta-neuraminate contacts are provided by Asn162 and Asn185. Asn219 and Asn234 each carry an N-linked (GlcNAc...) asparagine glycan. CMP-N-acetyl-beta-neuraminate contacts are provided by Thr294, Thr295, Gly296, Trp316, Tyr329, and His330. Residue His346 is the Proton donor/acceptor of the active site.

Belongs to the glycosyltransferase 29 family. In terms of processing, autopolysialylated. Autopolysialylation is not a prerequisite for the polysialylation acitity, but enhances the polysialylation acitity.

The protein resides in the golgi apparatus membrane. The protein localises to the secreted. It is found in the cell membrane. It carries out the reaction [N-acetyl-alpha-D-neuraminosyl-(2-&gt;8)](n) + CMP-N-acetyl-beta-neuraminate = [N-acetyl-alpha-D-neuraminosyl-(2-&gt;8)](n+1) + CMP + H(+). It functions in the pathway protein modification; protein glycosylation. In terms of biological role, catalyzes the transfer of a sialic acid from a CMP-linked sialic acid donor onto a terminal alpha-2,3-, alpha-2,6-, or alpha-2,8-linked sialic acid of an N-linked glycan acceptor through alpha-2,8-linkages. Therefore, participates in polysialic acid synthesis on various sialylated N-acetyllactosaminyl oligosaccharides (alpha-2,3-, alpha-2,6-, or alpha-2,8-linked sialic acid), including NCAM1, NCAM1 N-glycans, FETUB N-glycans, and to a lesser extent sialylparagloboside (SPG) and AHSG, which does not require the initial addition of an alpha 2,8-sialic acid. However, does not exhibit sialic acid-polymerase activity. Catalyzes polysialic acid synthesis in the hippocampal on NCAM1 and supports neurite outgrowth. ST8SIA2-mediated polysialylation influences on oligodendrocyte differentiation and may promote the integrity of myelin and axons. This chain is Alpha-2,8-sialyltransferase 8B, found in Mus musculus (Mouse).